Reading from the N-terminus, the 435-residue chain is UDP-N-acetylmuramate--L-alanine ligase (435 aa).

108 to 114 (GAHGKST) provides a ligand contact to ATP.

It belongs to the MurCDEF family.

It is found in the cytoplasm. It catalyses the reaction UDP-N-acetyl-alpha-D-muramate + L-alanine + ATP = UDP-N-acetyl-alpha-D-muramoyl-L-alanine + ADP + phosphate + H(+). Its pathway is cell wall biogenesis; peptidoglycan biosynthesis. Its function is as follows. Cell wall formation. The chain is UDP-N-acetylmuramate--L-alanine ligase from Campylobacter curvus (strain 525.92).